We begin with the raw amino-acid sequence, 317 residues long: Spermidine synthase 2 (317 aa).

One can recognise a PABS domain in the interval 27–264 (PGWFSEISPL…GMIGFMLCST (238 aa)). Gln58 contributes to the S-adenosyl 3-(methylsulfanyl)propylamine binding site. Tyr88 lines the putrescine pocket. S-adenosyl 3-(methylsulfanyl)propylamine is bound by residues Gln89, Asp113, Glu133, 164–165 (DG), and Asp183. The active-site Proton acceptor is the Asp183. Putrescine is bound by residues 183-186 (DSSD) and Tyr252.

The protein belongs to the spermidine/spermine synthase family.

It catalyses the reaction S-adenosyl 3-(methylsulfanyl)propylamine + putrescine = S-methyl-5'-thioadenosine + spermidine + H(+). The protein operates within amine and polyamine biosynthesis; spermidine biosynthesis; spermidine from putrescine: step 1/1. The chain is Spermidine synthase 2 from Datura stramonium (Jimsonweed).